The sequence spans 445 residues: Phosphoglucosamine mutase (445 aa).

The Phosphoserine intermediate role is filled by S105. Positions 105, 244, 246, and 248 each coordinate Mg(2+). At S105 the chain carries Phosphoserine.

The protein belongs to the phosphohexose mutase family. Mg(2+) serves as cofactor. Post-translationally, activated by phosphorylation.

It catalyses the reaction alpha-D-glucosamine 1-phosphate = D-glucosamine 6-phosphate. Its function is as follows. Catalyzes the conversion of glucosamine-6-phosphate to glucosamine-1-phosphate. This is Phosphoglucosamine mutase from Janthinobacterium sp. (strain Marseille) (Minibacterium massiliensis).